The chain runs to 176 residues: Tumor necrosis factor receptor superfamily member 23 (176 aa).

Residues 1–29 (MVTFSHVSSLSHWFLLLLLLNLFLPVIFA) form the signal peptide. TNFR-Cys repeat units lie at residues 37 to 72 (NCPD…QGQC), 74 to 114 (KCHP…DRKC), and 115 to 155 (ECQI…NTVC). 9 disulfide bridges follow: cysteine 38-cysteine 49, cysteine 50-cysteine 63, cysteine 53-cysteine 72, cysteine 75-cysteine 90, cysteine 93-cysteine 106, cysteine 96-cysteine 114, cysteine 116-cysteine 131, cysteine 134-cysteine 147, and cysteine 137-cysteine 155. An N-linked (GlcNAc...) asparagine glycan is attached at asparagine 148. Cysteine 155 carries the GPI-anchor amidated cysteine lipid modification. A propeptide spans 156–176 (SSSVSNPRNWLFLLMLIVFCI) (removed in mature form).

In terms of tissue distribution, ubiquitous.

The protein localises to the cell membrane. In terms of biological role, receptor for the cytotoxic ligand TRAIL. Lacks a cytoplasmic death domain and hence is not capable of inducing apoptosis. May protect cells against TRAIL mediated apoptosis through ligand competition. Cannot induce the NF-kappa-B pathway. In Mus musculus (Mouse), this protein is Tumor necrosis factor receptor superfamily member 23 (Tnfrsf23).